We begin with the raw amino-acid sequence, 85 residues long: Large ribosomal subunit protein bL27 (85 aa).

A disordered region spans residues 1-21 (MAHKKGGGSTKNGRDSNPKYL).

This sequence belongs to the bacterial ribosomal protein bL27 family.

The protein is Large ribosomal subunit protein bL27 of Chlorobium chlorochromatii (strain CaD3).